The chain runs to 428 residues: 3-phosphoshikimate 1-carboxyvinyltransferase (428 aa).

Residues lysine 20, serine 21, and arginine 25 each coordinate 3-phosphoshikimate. Lysine 20 contacts phosphoenolpyruvate. The phosphoenolpyruvate site is built by glycine 92 and arginine 120. Positions 166, 168, 314, and 341 each coordinate 3-phosphoshikimate. Glutamine 168 contacts phosphoenolpyruvate. The Proton acceptor role is filled by aspartate 314. The phosphoenolpyruvate site is built by arginine 345 and arginine 387.

It belongs to the EPSP synthase family. Monomer.

It localises to the cytoplasm. The enzyme catalyses 3-phosphoshikimate + phosphoenolpyruvate = 5-O-(1-carboxyvinyl)-3-phosphoshikimate + phosphate. It participates in metabolic intermediate biosynthesis; chorismate biosynthesis; chorismate from D-erythrose 4-phosphate and phosphoenolpyruvate: step 6/7. Its function is as follows. Catalyzes the transfer of the enolpyruvyl moiety of phosphoenolpyruvate (PEP) to the 5-hydroxyl of shikimate-3-phosphate (S3P) to produce enolpyruvyl shikimate-3-phosphate and inorganic phosphate. The polypeptide is 3-phosphoshikimate 1-carboxyvinyltransferase (Listeria monocytogenes serotype 4a (strain HCC23)).